We begin with the raw amino-acid sequence, 452 residues long: 1,3-beta-glucanosyltransferase gel1 (452 aa).

Residues Met1 to Ala19 form the signal peptide. An intrachain disulfide couples Cys71 to Cys100. (1,3-beta-D-glucosyl)n-binding residues include Tyr89, Asn159, Glu160, Asp201, and Arg206. The active-site Proton donor is Glu160. 2 disulfides stabilise this stretch: Cys215–Cys345 and Cys233–Cys264. The N-linked (GlcNAc...) asparagine glycan is linked to Asn249. The Nucleophile role is filled by Glu261. Tyr292 is a binding site for (1,3-beta-D-glucosyl)n. Polar residues predominate over residues Glu325–Gly340. The interval Glu325–Ala419 is disordered. Asn337 is a glycosylation site (N-linked (GlcNAc...) asparagine). Residues Ser393–Ala419 are compositionally biased toward low complexity. Ala419 is lipidated: GPI-like-anchor amidated alanine. Positions Ala420–Leu452 are cleaved as a propeptide — removed in mature form.

Belongs to the glycosyl hydrolase 72 family. The GPI-like anchor contains a phosphoceramide lipid group. The anchor position has not been determined.

It localises to the cell membrane. Splits internally a 1,3-beta-glucan molecule and transfers the newly generated reducing end (the donor) to the non-reducing end of another 1,3-beta-glucan molecule (the acceptor) forming a 1,3-beta linkage, resulting in the elongation of 1,3-beta-glucan chains in the cell wall. Involved in cell wall morphogenesis. The polypeptide is 1,3-beta-glucanosyltransferase gel1 (gel1) (Aspergillus fumigatus (strain CBS 144.89 / FGSC A1163 / CEA10) (Neosartorya fumigata)).